Reading from the N-terminus, the 69-residue chain is Trypsin/subtilisin inhibitor (69 aa).

The cysteines at positions 4 and 49 are disulfide-linked.

This sequence belongs to the protease inhibitor I13 (potato type I serine protease inhibitor) family.

Its function is as follows. Inhibitor of trypsin, chymotrypsin, subtilisin, etc. This is Trypsin/subtilisin inhibitor from Amaranthus caudatus (Love-lies-bleeding).